We begin with the raw amino-acid sequence, 689 residues long: MNYENLLIEVGTEELPPKALRKLAESFVSNFTDELEKAELSFESAQWHAAPRRLAFTVNQLVLAQADKVVEKRGPAIAQAFDADGNPTKAAMGWARGNGISVEQAERLKTDKGEWLLHQAKVVGVETKSLINDMAQRALDKLPIPKPMRWGTSKTQFIRPVHTVTMLLGSELVEGELLGVKSARVIRGHRFMGKKSFELDHADNYLSALKEQGMVLADYEARKAIIKTDAEAAAAKIGGVADLEDDLLEEVTSLVEWPVVLTANFEEKFLDVPAEALVYTMKGDQKYFPVFDKAGQLLPHFIFVTNIESKDPQVIISGNEKVVRPRLADAEFFFETDKKQTLESRLASLETVVFQKQLGTIKQRVERISQLAGYIAASIDADSDEASRAGLLSKSDLMTNMVMEFTDLQGTMGMHYARLNGETEAVAVALAEQYKPKFSGDTVPTAPISVCVALAEKLDTLVGIFGIGQAPKGAADPFALRRAAIGVLRICLENNLPLDLVDLIAKAQELHGDNLTNDKAAEQVLEFFMGRFRAWYQDQGVSVDVILAVLARRPTAPADFDSRIKAVAHFRSLEQASALAAANKRVSNILAKVEGELATDISSELLVENAEKALAEKLNELQPQLAPLFAAANYQQALSLLADLRESVDTFFEDVMVMADDEALKNNRLALLSSLREQFLHAADISLLQ.

The protein belongs to the class-II aminoacyl-tRNA synthetase family. Tetramer of two alpha and two beta subunits.

The protein localises to the cytoplasm. The enzyme catalyses tRNA(Gly) + glycine + ATP = glycyl-tRNA(Gly) + AMP + diphosphate. This is Glycine--tRNA ligase beta subunit from Shewanella woodyi (strain ATCC 51908 / MS32).